A 121-amino-acid polypeptide reads, in one-letter code: Basic phospholipase A2 BmjeTX-I (121 aa).

7 disulfide bridges follow: Cys26–Cys114, Cys28–Cys45, Cys44–Cys95, Cys50–Cys121, Cys51–Cys88, Cys58–Cys82, and Cys76–Cys86. Residues Tyr27, Gly29, and Gly31 each coordinate Ca(2+). The active site involves His48. Asp49 contacts Ca(2+). Asp89 is an active-site residue.

The cofactor is Ca(2+). In terms of tissue distribution, expressed by the venom gland.

Its subcellular location is the secreted. The enzyme catalyses a 1,2-diacyl-sn-glycero-3-phosphocholine + H2O = a 1-acyl-sn-glycero-3-phosphocholine + a fatty acid + H(+). Snake venom phospholipase A2 (PLA2) that induces a slight blockade of neuromuscular contraction in an indirectly stimulated chick biventer cervicis nerve-muscle preparation. Does not inhibit contraction of chick biventer cervicic nerve-muscle preparation in response to treatment with acetylcholine or KCl. The neuromuscular blockade is mediated by inhibitory action at the presynaptic motor nerve endings. Lyses skeletal myoblasts and myotubes in vitro, and intramuscular injection causes local muscle necrosis. Induces edema in the mouse foot pad. Induces a transient increase of IL-6 levels. PLA2 catalyzes the calcium-dependent hydrolysis of the 2-acyl groups in 3-sn-phosphoglycerides. The chain is Basic phospholipase A2 BmjeTX-I from Bothrops marajoensis (Marajo lancehead).